Here is a 199-residue protein sequence, read N- to C-terminus: Chaperone protein TorD (199 aa).

It belongs to the TorD/DmsD family. TorD subfamily.

The protein localises to the cytoplasm. Functionally, involved in the biogenesis of TorA. Acts on TorA before the insertion of the molybdenum cofactor and, as a result, probably favors a conformation of the apoenzyme that is competent for acquiring the cofactor. The sequence is that of Chaperone protein TorD from Escherichia coli O139:H28 (strain E24377A / ETEC).